A 749-amino-acid chain; its full sequence is Photosystem I P700 chlorophyll a apoprotein A1 (749 aa).

The next 8 membrane-spanning stretches (helical) occupy residues 70 to 93 (VFSA…FHGA), 156 to 179 (LYAT…FHYH), 195 to 219 (LNHH…HVSL), 291 to 309 (TAHH…GHMY), 346 to 369 (WHAQ…HHMY), 385 to 411 (LSLF…IFLV), 433 to 455 (AIIS…LYIH), and 531 to 549 (FLVH…LILL). 2 residues coordinate [4Fe-4S] cluster: C573 and C582. 2 helical membrane passes run 589 to 610 (HVFL…HFSW) and 663 to 685 (LSAY…MFLF). H674 is a chlorophyll a' binding site. Residues M682 and Y690 each coordinate chlorophyll a. W691 provides a ligand contact to phylloquinone. A helical transmembrane segment spans residues 723 to 743 (AVGVAHYLLGGIATTWAFFLA).

It belongs to the PsaA/PsaB family. As to quaternary structure, the PsaA/B heterodimer binds the P700 chlorophyll special pair and subsequent electron acceptors. PSI consists of a core antenna complex that captures photons, and an electron transfer chain that converts photonic excitation into a charge separation. The eukaryotic PSI reaction center is composed of at least 11 subunits. P700 is a chlorophyll a/chlorophyll a' dimer, A0 is one or more chlorophyll a, A1 is one or both phylloquinones and FX is a shared 4Fe-4S iron-sulfur center. is required as a cofactor.

It localises to the plastid. Its subcellular location is the chloroplast thylakoid membrane. The catalysed reaction is reduced [plastocyanin] + hnu + oxidized [2Fe-2S]-[ferredoxin] = oxidized [plastocyanin] + reduced [2Fe-2S]-[ferredoxin]. Its function is as follows. PsaA and PsaB bind P700, the primary electron donor of photosystem I (PSI), as well as the electron acceptors A0, A1 and FX. PSI is a plastocyanin-ferredoxin oxidoreductase, converting photonic excitation into a charge separation, which transfers an electron from the donor P700 chlorophyll pair to the spectroscopically characterized acceptors A0, A1, FX, FA and FB in turn. Oxidized P700 is reduced on the lumenal side of the thylakoid membrane by plastocyanin. This Zygnema circumcarinatum (Green alga) protein is Photosystem I P700 chlorophyll a apoprotein A1.